Here is a 252-residue protein sequence, read N- to C-terminus: 5'-nucleotidase SurE (252 aa).

A divalent metal cation is bound by residues aspartate 8, aspartate 9, serine 39, and asparagine 95.

This sequence belongs to the SurE nucleotidase family. Requires a divalent metal cation as cofactor.

The protein localises to the cytoplasm. It catalyses the reaction a ribonucleoside 5'-phosphate + H2O = a ribonucleoside + phosphate. Its function is as follows. Nucleotidase that shows phosphatase activity on nucleoside 5'-monophosphates. This Clostridium botulinum (strain ATCC 19397 / Type A) protein is 5'-nucleotidase SurE.